Here is a 570-residue protein sequence, read N- to C-terminus: Probable D-xylulose kinase A (570 aa).

Residues His95, Arg166, Asp282, and Asn283 each contribute to the substrate site. ATP is bound by residues Trp364, Gly469 to Gly470, and Asn473.

Belongs to the FGGY kinase family.

Its subcellular location is the cytoplasm. It carries out the reaction D-xylulose + ATP = D-xylulose 5-phosphate + ADP + H(+). Highly specific D-xylulose kinase which participates in the catabolism of xylose. Xylose is a major component of hemicelluloses such as xylan. Most fungi utilize D-xylose via three enzymatic reactions, xylose reductase (XR), xylitol dehydrogenase (XDH), and xylulokinase, to form xylulose 5-phosphate, which enters pentose phosphate pathway. The chain is Probable D-xylulose kinase A (xkiA) from Aspergillus niger (strain ATCC MYA-4892 / CBS 513.88 / FGSC A1513).